Reading from the N-terminus, the 90-residue chain is Small ribosomal subunit protein uS15c (90 aa).

The segment covering 1-11 (MVKNSFSSVIS) has biased composition (polar residues). The interval 1–20 (MVKNSFSSVISQEEKKENGG) is disordered.

It belongs to the universal ribosomal protein uS15 family. As to quaternary structure, part of the 30S ribosomal subunit.

It localises to the plastid. The protein localises to the chloroplast. The polypeptide is Small ribosomal subunit protein uS15c (rps15) (Cucumis sativus (Cucumber)).